We begin with the raw amino-acid sequence, 92 residues long: Protein RnfH (92 aa).

It belongs to the UPF0125 (RnfH) family.

The polypeptide is Protein RnfH (Neisseria gonorrhoeae (strain NCCP11945)).